The chain runs to 84 residues: ATP synthase subunit c (84 aa).

The next 2 membrane-spanning stretches (helical) occupy residues 10–30 (IAVAIMIGLAALGTAIGFAIL) and 53–73 (FIVAGLLDAISMIAVGVALFF).

Belongs to the ATPase C chain family. As to quaternary structure, F-type ATPases have 2 components, F(1) - the catalytic core - and F(0) - the membrane proton channel. F(1) has five subunits: alpha(3), beta(3), gamma(1), delta(1), epsilon(1). F(0) has three main subunits: a(1), b(2) and c(10-14). The alpha and beta chains form an alternating ring which encloses part of the gamma chain. F(1) is attached to F(0) by a central stalk formed by the gamma and epsilon chains, while a peripheral stalk is formed by the delta and b chains.

It localises to the cell inner membrane. In terms of biological role, f(1)F(0) ATP synthase produces ATP from ADP in the presence of a proton or sodium gradient. F-type ATPases consist of two structural domains, F(1) containing the extramembraneous catalytic core and F(0) containing the membrane proton channel, linked together by a central stalk and a peripheral stalk. During catalysis, ATP synthesis in the catalytic domain of F(1) is coupled via a rotary mechanism of the central stalk subunits to proton translocation. Functionally, key component of the F(0) channel; it plays a direct role in translocation across the membrane. A homomeric c-ring of between 10-14 subunits forms the central stalk rotor element with the F(1) delta and epsilon subunits. In Shewanella putrefaciens (strain CN-32 / ATCC BAA-453), this protein is ATP synthase subunit c.